The following is a 376-amino-acid chain: Ribosomal RNA large subunit methyltransferase G (376 aa).

The protein belongs to the methyltransferase superfamily. RlmG family.

The protein resides in the cytoplasm. It catalyses the reaction guanosine(1835) in 23S rRNA + S-adenosyl-L-methionine = N(2)-methylguanosine(1835) in 23S rRNA + S-adenosyl-L-homocysteine + H(+). Specifically methylates the guanine in position 1835 (m2G1835) of 23S rRNA. In Vibrio vulnificus (strain CMCP6), this protein is Ribosomal RNA large subunit methyltransferase G.